We begin with the raw amino-acid sequence, 170 residues long: Cathelicidin antimicrobial peptide (170 aa).

The N-terminal stretch at 1–30 (MKTQRDGPSLGRWSLVLLLLGLTMPLAITA) is a signal peptide. Positions 31–131 (QVLSYQEAVL…DISCDKDERK (101 aa)) are cleaved as a propeptide — cathelin-like domain (CLD). Intrachain disulfides connect Cys86–Cys97 and Cys108–Cys125. The interval 150–162 (FKKIGQKINDFLG) is active core.

It belongs to the cathelicidin family. Monomer, homodimer or homotrimer (in vitro). Oligomerizes as tetra- or hexamer in solution (in vitro). Post-translationally, proteolytically cleaved by proteinase PRTN3 into antibacterial peptide LL-37. Proteolytically cleaved by cathepsin CTSG and neutrophil elastase ELANE. In terms of processing, resistant to proteolytic degradation in solution, and when bound to both zwitterionic (mimicking mammalian membranes) and negatively charged membranes (mimicking bacterial membranes). After secretion onto the skin surface, the CAMP gene product is processed by a serine protease-dependent mechanism into multiple novel antimicrobial peptides distinct from and shorter than cathelicidin LL-37. These peptides show enhanced antimicrobial action, acquiring the ability to kill skin pathogens such as S.aureus, E.coli and C.albicans. These peptides have lost the ability to stimulate CXCL8/IL8 release from keratinocytes. The peptides act synergistically, killing bacteria at lower concentrations when present together, and maintain activity at increased salt condition.

Its subcellular location is the secreted. It localises to the vesicle. In terms of biological role, antimicrobial protein that is an integral component of the innate immune system. Binds to bacterial lipopolysaccharides (LPS). Acts via neutrophil N-formyl peptide receptors to enhance the release of CXCL2. Postsecretory processing generates multiple cathelicidin antimicrobial peptides with various lengths which act as a topical antimicrobial defense in sweat on skin. The unprocessed precursor form, cathelicidin antimicrobial peptide, inhibits the growth of Gram-negative E.coli and E.aerogenes with efficiencies comparable to that of the mature peptide LL-37 (in vitro). Functionally, antimicrobial peptide that is an integral component of the innate immune system. Binds to bacterial lipopolysaccharides (LPS). Causes membrane permeabilization by forming transmembrane pores (in vitro). Causes lysis of E.coli. Exhibits antimicrobial activity against Gram-negative bacteria such as P.aeruginosa, S.typhimurium, E.aerogenes, E.coli and P.syringae, Gram-positive bacteria such as L.monocytogenes, S.epidermidis, S.pyogenes and S.aureus, as well as vancomycin-resistant enterococci (in vitro). Exhibits antimicrobial activity against methicillin-resistant S.aureus, P.mirabilis, and C.albicans in low-salt media, but not in media containing 100 mM NaCl (in vitro). Forms chiral supramolecular assemblies with quinolone signal (PQS) molecules of P.aeruginosa, which may lead to interference of bacterial quorum signaling and perturbance of bacterial biofilm formation. May form supramolecular fiber-like assemblies on bacterial membranes. Induces cytokine and chemokine producation as well as TNF/TNFA and CSF2/GMCSF production in normal human keratinocytes. Exhibits hemolytic activity against red blood cells. Its function is as follows. Exhibits antimicrobial activity against E.coli and B.megaterium (in vitro). In Cebus capucinus (White-faced sapajou), this protein is Cathelicidin antimicrobial peptide.